A 364-amino-acid chain; its full sequence is Chaperone protein DnaJ (364 aa).

Positions 4–69 (DYYEILGLSK…NKKAKYDRFG (66 aa)) constitute a J domain. The CR-type zinc-finger motif lies at 135–213 (GYKNNINITR…CKGKGRITNQ (79 aa)). Zn(2+)-binding residues include Cys-148, Cys-151, Cys-165, Cys-168, Cys-187, Cys-190, Cys-201, and Cys-204. 4 CXXCXGXG motif repeats span residues 148–155 (CHSCLGKK), 165–172 (CNMCNGSG), 187–194 (CSKCYGEG), and 201–208 (CKSCKGKG).

This sequence belongs to the DnaJ family. As to quaternary structure, homodimer. It depends on Zn(2+) as a cofactor.

The protein localises to the cytoplasm. Its function is as follows. Participates actively in the response to hyperosmotic and heat shock by preventing the aggregation of stress-denatured proteins and by disaggregating proteins, also in an autonomous, DnaK-independent fashion. Unfolded proteins bind initially to DnaJ; upon interaction with the DnaJ-bound protein, DnaK hydrolyzes its bound ATP, resulting in the formation of a stable complex. GrpE releases ADP from DnaK; ATP binding to DnaK triggers the release of the substrate protein, thus completing the reaction cycle. Several rounds of ATP-dependent interactions between DnaJ, DnaK and GrpE are required for fully efficient folding. Also involved, together with DnaK and GrpE, in the DNA replication of plasmids through activation of initiation proteins. The sequence is that of Chaperone protein DnaJ from Borrelia garinii subsp. bavariensis (strain ATCC BAA-2496 / DSM 23469 / PBi) (Borreliella bavariensis).